The primary structure comprises 129 residues: Sm-like protein LSM4 (129 aa).

A Sm domain is found at 2 to 75 (LPLSLLKTAQ…IKYLRVPDEV (74 aa)). A compositionally biased stretch (basic and acidic residues) spans 79–90 (VQEEKTRTDRKP). The interval 79–129 (VQEEKTRTDRKPPGVGRGRGRGVDDGGARGRGRGTSMGKMGGNRGAGRGRG) is disordered. Residues 111–129 (RGTSMGKMGGNRGAGRGRG) show a composition bias toward gly residues.

The protein belongs to the snRNP Sm proteins family. As to quaternary structure, component of the heptameric LSM1-LSM7 complex that forms a seven-membered ring structure with a donut shape. The LSM subunits are arranged in the order LSM1, LSM2, LSM3, LSM6, LSM5, LSM7 and LSM4. LSM4 subunit interacts only with its two neighboring subunits, LSM1A or LSM1B and LSM7. Component of the heptameric LSM2-LSM8 complex that forms a seven-membered ring structure with a donut shape. The LSM subunits are arranged in the order LSM8, LSM2, LSM3, LSM6, LSM5, LSM7 and LSM4. LSM4 subunit interacts only with its two neighboring subunits, LSM8 and LSM7. Methylated by PMRT15/SKB1 in response to salt stress or abscisic acid (ABA) treatment. In terms of tissue distribution, expressed in roots, leaves, stems, flowers and siliques.

It is found in the cytoplasm. Its subcellular location is the nucleus. Its function is as follows. Component of LSM protein complexes, which are involved in RNA processing. Component of the cytoplasmic LSM1-LSM7 complex which is involved in mRNA degradation by promoting decapping and leading to accurate 5'-3' mRNA decay. The cytoplasmic LSM1-LSM7 complex regulates developmental gene expression by the decapping of specific development-related transcripts. Component of the nuclear LSM2-LSM8 complex which is involved splicing nuclear mRNAs. LSM2-LSM8 binds directly to the U6 small nuclear RNAs (snRNAs) and is essential for accurate splicing of selected development-related mRNAs through the stabilization of the spliceosomal U6 snRNA. Plays a critical role in the regulation of development-related gene expression. This chain is Sm-like protein LSM4, found in Arabidopsis thaliana (Mouse-ear cress).